Reading from the N-terminus, the 431-residue chain is Polyprenol-phosphate-mannose-dependent alpha-(1-2)-phosphatidylinositol pentamannoside mannosyltransferase (431 aa).

The next 10 membrane-spanning stretches (helical) occupy residues alanine 43 to proline 63, phenylalanine 108 to tryptophan 128, glycine 148 to isoleucine 168, phenylalanine 175 to proline 195, leucine 202 to valine 222, alanine 229 to glycine 249, glycine 290 to tryptophan 310, leucine 332 to isoleucine 352, isoleucine 364 to alanine 384, and leucine 397 to alanine 417.

Belongs to the glycosyltransferase 87 family.

Its subcellular location is the cell membrane. The protein operates within phospholipid metabolism; phosphatidylinositol metabolism. Functionally, catalyzes the alpha-1,2 addition of a mannose residue from polyprenol-phosphate-mannose (PPM) to a monoacyl phosphatidylinositol tetramannoside (AcPIM4) to generate a monoacyl phosphatidylinositol pentamannoside (AcPIM5). The protein is Polyprenol-phosphate-mannose-dependent alpha-(1-2)-phosphatidylinositol pentamannoside mannosyltransferase (pimE) of Mycobacterium tuberculosis (strain CDC 1551 / Oshkosh).